A 228-amino-acid chain; its full sequence is MADS-box transcription factor 22 (228 aa).

One can recognise an MADS-box domain in the interval 1–61; the sequence is MARERREIKR…GKLSHFASSS (61 aa). Residues 86–176 form the K-box domain; that stretch reads LNLEHSKYAH…RNQVSQISPA (91 aa). Residues 189 to 217 form a disordered region; it reads EGQSSESVMTALHSGSSQSQDNDDGSDVS.

As to expression, expressed in palea and stamen primordia. Expressed in shoots and coleoptiles.

It is found in the nucleus. Probable transcription factor. May be required for spikelet (rice flower) development. Transcription factor that functions to support the MADS55 in its function as negative regulator of brassinosteroid signaling. This Oryza sativa subsp. japonica (Rice) protein is MADS-box transcription factor 22 (MADS22).